A 251-amino-acid polypeptide reads, in one-letter code: Aquaporin (251 aa).

The Cytoplasmic portion of the chain corresponds to 1–11 (MAGETLRKIQS). The helical transmembrane segment at 12-32 (LLGEMVASFIFGFAVYSAILG) threads the bilayer. The Extracellular portion of the chain corresponds to 33–42 (STIAQQPAAK). The helical transmembrane segment at 43–63 (VIIGLTVGFSAIGIIYSFSDV) threads the bilayer. Residues 64–86 (TIAHFNPAITLAAILTGKMGILC) are Cytoplasmic-facing. Residues 69–71 (NPA) carry the NPA motif. The helical transmembrane segment at 87 to 107 (GLGYMLAQCVGFILAVCALLV) threads the bilayer. Over 108-133 (CSPVGYKETLNVIRPAPAPFGADNLN) the chain is Extracellular. A helical membrane pass occupies residues 134–154 (VFFTEFFLTAILVHIAFAVAV). At 155–179 (NPYRPKVDTDGKFVDPDEKEPVDRR) the chain is on the cytoplasmic side. The chain crosses the membrane as a helical span at residues 180–200 (ITAPLCIGLTLGFLAFMGLVT). Topologically, residues 201–224 (SGGAFNPGLTLAPVIMSNTWQHFW) are extracellular. The short motif at 206–208 (NPG) is the NPG element. The helical transmembrane segment at 225-245 (LYLGAQYLGGLVGGLLQVFVL) threads the bilayer. The Cytoplasmic segment spans residues 246–251 (YKLSSN).

It belongs to the MIP/aquaporin (TC 1.A.8) family.

It is found in the cell membrane. Functionally, water channel required to facilitate the transport of water across membranes. Involved in osmotolerance. In Encephalitozoon hellem (Microsporidian parasite), this protein is Aquaporin (AQP).